Consider the following 226-residue polypeptide: Gap junction beta-2 protein (226 aa).

The stretch at 2–13 (DWGTLQTILGGV) is an intramembrane region. The Cytoplasmic segment spans residues 14–20 (NKHSTSI). Residues 21–40 (GKIWLTVLFIFRIMILVVAA) form a helical membrane-spanning segment. Over 41 to 73 (KEVWGDEQADFVCNTLQPGCKNVCYDHYFPISH) the chain is Extracellular. Positions 42, 45, and 47 each coordinate Ca(2+). Cystine bridges form between C53–C180, C60–C174, and C64–C169. Residues 74–94 (IRLWALQLIFVSTPALLVAMH) form a helical membrane-spanning segment. At 95 to 135 (VAYRRHEKKRKFIKGEIKSEFKDIEEIKTQKVRIEGSLWWT) the chain is on the cytoplasmic side. Residues 136-156 (YTSSIFFRVIFEAAFMYVFYV) form a helical membrane-spanning segment. The Extracellular segment spans residues 157–189 (MYDGFSMQRLVKCNAWPCPNTVDCFVSRPTEKT). Residues 190–210 (VFTVFMIAVSGICILLNVTEL) form a helical membrane-spanning segment. Topologically, residues 211–226 (CYLLIRYCSGKSKKPV) are cytoplasmic.

Belongs to the connexin family. Beta-type (group I) subfamily. A hemichannel or connexon is composed of a hexamer of connexins. A functional gap junction is formed by the apposition of two hemichannels. Forms heteromeric channels with GJB4. Interacts with CNST.

Its subcellular location is the cell membrane. The protein localises to the cell junction. It is found in the gap junction. Its function is as follows. Structural component of gap junctions. Gap junctions are dodecameric channels that connect the cytoplasm of adjoining cells. They are formed by the docking of two hexameric hemichannels, one from each cell membrane. Small molecules and ions diffuse from one cell to a neighboring cell via the central pore. This Gorilla gorilla gorilla (Western lowland gorilla) protein is Gap junction beta-2 protein (GJB2).